We begin with the raw amino-acid sequence, 414 residues long: Serine/arginine (SR)-type shuttling mRNA binding protein NPL3 (414 aa).

The span at 1 to 11 (MSEAQETHVEQ) shows a compositional bias: basic and acidic residues. Residues 1 to 119 (MSEAQETHVE…GRPPMHHRQE (119 aa)) are disordered. Ser15 bears the Phosphoserine mark. Positions 33-51 (DAPQEPQVPQESAPQESAP) are enriched in low complexity. Over residues 52–68 (QEPPAPQEQNDVPPPSN) the composition is skewed to pro residues. Over residues 75 to 92 (EESHSVQDYQEAHQHHQP) the composition is skewed to basic and acidic residues. Ser79 is subject to Phosphoserine. Positions 93-105 (PEPQPYYPPPPPG) are enriched in pro residues. RRM domains follow at residues 125 to 195 (TRLF…YSKL) and 200 to 275 (YRIT…RDDN). A phosphoserine mark is found at Ser182, Ser212, and Ser224. Residues 269-299 (TVERDDNPPPIRRSNRGGFRGRGGFRGGFRG) are disordered. Residues 286 to 299 (GFRGRGGFRGGFRG) are compositionally biased toward gly residues. A dimethylated arginine mark is found at Arg288, Arg290, Arg294, and Arg298. Arg302 carries the post-translational modification Omega-N-methylarginine. Arg307 and Arg314 each carry dimethylated arginine; alternate. Arg307 and Arg314 each carry omega-N-methylarginine; alternate. Omega-N-methylarginine occurs at positions 321, 329, 337, and 344. The interval 343–414 (SRGGYDSPRG…DAPRERSPTR (72 aa)) is disordered. Residues 346–360 (GYDSPRGGYDSPRGG) are compositionally biased toward low complexity. Arg351 carries the post-translational modification Dimethylated arginine; alternate. Arg351 carries the omega-N-methylarginine; alternate modification. A Phosphoserine modification is found at Ser356. Residues Arg358, Arg363, Arg377, and Arg384 each carry the dimethylated arginine; alternate modification. Omega-N-methylarginine; alternate occurs at positions 358, 363, 377, and 384. Positions 379-389 (SYGGSRGGYDG) are enriched in gly residues. Residue Arg391 is modified to Omega-N-methylarginine. The segment covering 399–414 (DAYRTRDAPRERSPTR) has biased composition (basic and acidic residues).

Belongs to the RRM GAR family. Interacts with RRP6. Methylated by HMT1. The methylation is required for nuclear export.

It localises to the cytoplasm. The protein resides in the nucleus. It is found in the stress granule. Functionally, involved in mRNA processing and export. Required for efficient splicing of a large set of pre-mRNAs by efficient co-transcriptional recruitment of the splicing machinery. Remains associated with the mRNP during early steps of translation elongation. The sequence is that of Serine/arginine (SR)-type shuttling mRNA binding protein NPL3 from Saccharomyces cerevisiae (strain ATCC 204508 / S288c) (Baker's yeast).